A 559-amino-acid polypeptide reads, in one-letter code: MKGELLCVLLLCGVAFTLPDQGIHRRFRRGARSYRATCRDEQTQTTYQQHQSWLRPMLRGNRVEYCRCNSGLAQCHSVPVRSCSEPRCFNGGTCQQALYFSDFVCQCPDGFVGKRCDIDTRATCFEGQGITYRGTWSTAENGAECINWNSSALSQKPYSARRPNAIKLGLGNHNYCRNPDRDVKPWCYVFKAGKYTTEFCSTPACPKGPTEDCYVGKGVTYRGTHSFTTSKASCLPWNSMILIGKTYTAWRANSQALGLGRHNYCRNPDGDAKPWCHVMKDRKLTWEYCDMSPCSTCGLRQYKQPQFRIKGGLFTDITSHPWQAAIFVKNKRSPGERFLCGGVLISSCWVLSAAHCFVERFPPHHLKVVLGRTYRVVPGEEEQTFEIEKYIVHKEFDDDTYDNDIALLQLRSDSSQCAQESSSVGTACLPDPDVQLPDWTECELSGYGKHEASSPFFSDRLKEAHVRLYPSSRCTSQHLFNKTITSNMLCAGDTRTGGNQDVHDACQGDSGGPLVCMIDKRMTLLGIISWGLGCGQKDVPGIYTKVTNYLNWIQDNMKQ.

The first 17 residues, 1 to 17 (MKGELLCVLLLCGVAFT), serve as a signal peptide directing secretion. Residues 18-29 (LPDQGIHRRFRR) constitute a propeptide that is removed on maturation. Positions 30–32 (GAR) are cleaved as a propeptide — removed by plasmin. Residues 36 to 78 (ATCRDEQTQTTYQQHQSWLRPMLRGNRVEYCRCNSGLAQCHSV) form the Fibronectin type-I domain. Intrachain disulfides connect cysteine 38–cysteine 68, cysteine 66–cysteine 75, cysteine 83–cysteine 94, cysteine 88–cysteine 105, cysteine 107–cysteine 116, cysteine 124–cysteine 205, cysteine 145–cysteine 187, cysteine 176–cysteine 200, cysteine 213–cysteine 294, cysteine 234–cysteine 276, cysteine 265–cysteine 289, cysteine 297–cysteine 428, cysteine 340–cysteine 356, cysteine 348–cysteine 417, cysteine 442–cysteine 516, cysteine 474–cysteine 490, and cysteine 506–cysteine 534. The segment at 39–49 (RDEQTQTTYQQ) is important for binding to annexin A2. Residues 79-117 (PVRSCSEPRCFNGGTCQQALYFSDFVCQCPDGFVGKRCD) enclose the EGF-like domain. Kringle domains are found at residues 124 to 205 (CFEG…TPAC) and 213 to 294 (CYVG…MSPC). Residue asparagine 149 is glycosylated (N-linked (GlcNAc...) asparagine). The 250-residue stretch at 309 to 558 (IKGGLFTDIT…YLNWIQDNMK (250 aa)) folds into the Peptidase S1 domain. Catalysis depends on charge relay system residues histidine 355 and aspartate 404. An N-linked (GlcNAc...) asparagine glycan is attached at asparagine 481. Serine 510 functions as the Charge relay system in the catalytic mechanism.

The protein belongs to the peptidase S1 family. In terms of assembly, heterodimer of chain A and chain B held by a disulfide bond. Binds to fibrin with high affinity. This interaction leads to an increase in the catalytic efficiency of the enzyme due to an increase in affinity for plasminogen. Similarly, binding to heparin increases the activation of plasminogen. Binds to annexin A2, cytokeratin-8, fibronectin and laminin. Binds to mannose receptor and the low-density lipoprotein receptor-related protein (LRP1); these proteins are involved in TPA clearance. Binds LRP1B; binding is followed by internalization and degradation. Forms heterodimer with SERPINA5. Interacts with SERPINE1. In complex with SERPINE1, interacts with SORL1. Post-translationally, the single chain, almost fully active enzyme, can be further processed into a two-chain fully active form by a cleavage after Arg-308 catalyzed by plasmin, tissue kallikrein or factor Xa.

Its subcellular location is the secreted. It localises to the extracellular space. It carries out the reaction Specific cleavage of Arg-|-Val bond in plasminogen to form plasmin.. Inhibited by SERPINA5. Inhibited by SERPINE1. In terms of biological role, converts the abundant, but inactive, zymogen plasminogen to plasmin by hydrolyzing a single Arg-Val bond in plasminogen. By controlling plasmin-mediated proteolysis, it plays an important role in tissue remodeling and degradation, in cell migration and many other physiopathological events. During oocyte activation, plays a role in cortical granule reaction in the zona reaction, which contributes to the block to polyspermy. This is Tissue-type plasminogen activator (Plat) from Rattus norvegicus (Rat).